Consider the following 457-residue polypeptide: MRTEWVAKRRGQGNVTQMHYARQGVITEEMQYVARRENLPADLIREEVARGRMIIPANINHTNLEPMAIGIASKCKVNANIGASPNSSNLQEEVDKLNLAVKYGADTVMDLSTGGGNLDEIRTAIINASPVPIGTVPVYQALESVHGTIENLTPDDFLHIIEKHAQQGVDYQTIHAGILIEHLPLVRSRITGIVSRGGGILARWMLHHHKQNPLYTHFGDIIEIFKRYDVSFSLGDSLRPGCTHDASDDAQLAELKTLGQLTRKAWEHDVQVMVEGPGHVPMDQIEFNVKKQMEECSEAPFYVLGPLVTDIAPGYDHITSAIGAAMAGWYGTAMLCYVTPKEHLGLPNAEDVRNGLIAYKIAAHAADIARHRPGARDRDDELSKARYNFDWNRQFELSLDPERAKEYHDETLPADIYKTAEFCSMCGPKFCPMQTKVDADALTELEKFLAKEPVTQG.

Substrate is bound by residues asparagine 80, methionine 109, tyrosine 139, histidine 175, 195-197, 236-239, and glutamate 275; these read SRG and DSLR. Histidine 279 contributes to the Zn(2+) binding site. Position 302 (tyrosine 302) interacts with substrate. Histidine 343 is a Zn(2+) binding site. [4Fe-4S] cluster contacts are provided by cysteine 423, cysteine 426, and cysteine 431.

Belongs to the ThiC family. The cofactor is [4Fe-4S] cluster.

It catalyses the reaction 5-amino-1-(5-phospho-beta-D-ribosyl)imidazole + S-adenosyl-L-methionine = 4-amino-2-methyl-5-(phosphooxymethyl)pyrimidine + CO + 5'-deoxyadenosine + formate + L-methionine + 3 H(+). Its pathway is cofactor biosynthesis; thiamine diphosphate biosynthesis. Functionally, catalyzes the synthesis of the hydroxymethylpyrimidine phosphate (HMP-P) moiety of thiamine from aminoimidazole ribotide (AIR) in a radical S-adenosyl-L-methionine (SAM)-dependent reaction. This is Phosphomethylpyrimidine synthase from Nostoc sp. (strain PCC 7120 / SAG 25.82 / UTEX 2576).